The following is a 138-amino-acid chain: Large ribosomal subunit protein uL16 (138 aa).

The segment covering 1–13 (MLQPARRKYRKEQ) has biased composition (basic residues). Positions 1 to 21 (MLQPARRKYRKEQKGRNTGIA) are disordered.

It belongs to the universal ribosomal protein uL16 family. As to quaternary structure, part of the 50S ribosomal subunit.

Binds 23S rRNA and is also seen to make contacts with the A and possibly P site tRNAs. The sequence is that of Large ribosomal subunit protein uL16 from Albidiferax ferrireducens (strain ATCC BAA-621 / DSM 15236 / T118) (Rhodoferax ferrireducens).